The following is a 75-amino-acid chain: UPF0154 protein SERP0914 (75 aa).

The chain crosses the membrane as a helical span at residues 3 to 23 (IWVAIILIVIALIAGLIGGFL).

It belongs to the UPF0154 family.

It is found in the membrane. The chain is UPF0154 protein SERP0914 from Staphylococcus epidermidis (strain ATCC 35984 / DSM 28319 / BCRC 17069 / CCUG 31568 / BM 3577 / RP62A).